Reading from the N-terminus, the 246-residue chain is tRNA (guanine-N(1)-)-methyltransferase (246 aa).

S-adenosyl-L-methionine is bound by residues Gly112 and 131-136 (IGDYVL).

Belongs to the RNA methyltransferase TrmD family. Homodimer.

It localises to the cytoplasm. It carries out the reaction guanosine(37) in tRNA + S-adenosyl-L-methionine = N(1)-methylguanosine(37) in tRNA + S-adenosyl-L-homocysteine + H(+). Its function is as follows. Specifically methylates guanosine-37 in various tRNAs. This is tRNA (guanine-N(1)-)-methyltransferase from Thermosipho melanesiensis (strain DSM 12029 / CIP 104789 / BI429).